Reading from the N-terminus, the 306-residue chain is Serrate RNA effector molecule homolog (306 aa).

The tract at residues 1–28 (HKEEELLGSSGGPPPEEPPKEGNPAEIN) is disordered. Threonine 101 is modified (phosphothreonine). At serine 109 the chain carries Phosphoserine. Residues 251–284 (GPPYPHGPYGAGRGNYDAFRGQGGYPGKPRNRMV) form a disordered region. Residues arginine 263, arginine 270, and arginine 280 each carry the omega-N-methylarginine modification.

This sequence belongs to the ARS2 family. Interacts with CASP8AP2, ERBB4, NCBP1/CBP80 and DROSHA. Interacts with LUZP4. Interacts with NCBP2/CBP20 and NCBP3.

It is found in the nucleus. It localises to the nucleoplasm. The protein localises to the cytoplasm. Its function is as follows. Acts as a mediator between the cap-binding complex (CBC) and the primary microRNAs (miRNAs) processing machinery during cell proliferation. Contributes to the stability and delivery of capped primary miRNA transcripts to the primary miRNA processing complex containing DGCR8 and DROSHA, thereby playing a role in RNA-mediated gene silencing (RNAi) by miRNAs. Binds capped RNAs (m7GpppG-capped RNA); however interaction is probably mediated via its interaction with NCBP1/CBP80 component of the CBC complex. Involved in cell cycle progression at S phase. Does not directly confer arsenite resistance but rather modulates arsenic sensitivity. Independently of its activity on miRNAs, necessary and sufficient to promote neural stem cell self-renewal. Does so by directly binding SOX2 promoter and positively regulating its transcription. The protein is Serrate RNA effector molecule homolog (SRRT) of Cricetulus griseus (Chinese hamster).